A 485-amino-acid polypeptide reads, in one-letter code: Probable phosphomannomutase (485 aa).

The active-site Phosphoserine intermediate is the Ser-86. Residues Ser-86, Asp-236, Asp-238, and Asp-240 each contribute to the Mg(2+) site.

It belongs to the phosphohexose mutase family. Mg(2+) serves as cofactor.

It catalyses the reaction alpha-D-mannose 1-phosphate = D-mannose 6-phosphate. The polypeptide is Probable phosphomannomutase (Haemophilus influenzae (strain ATCC 51907 / DSM 11121 / KW20 / Rd)).